Reading from the N-terminus, the 75-residue chain is DNA-directed RNA polymerase subunit omega (75 aa).

This sequence belongs to the RNA polymerase subunit omega family. In cyanobacteria the RNAP catalytic core is composed of 2 alpha, 1 beta, 1 beta', 1 gamma and 1 omega subunit. When a sigma factor is associated with the core the holoenzyme is formed, which can initiate transcription.

The catalysed reaction is RNA(n) + a ribonucleoside 5'-triphosphate = RNA(n+1) + diphosphate. Promotes RNA polymerase assembly. Latches the N- and C-terminal regions of the beta' subunit thereby facilitating its interaction with the beta and alpha subunits. In Gloeothece citriformis (strain PCC 7424) (Cyanothece sp. (strain PCC 7424)), this protein is DNA-directed RNA polymerase subunit omega.